The chain runs to 927 residues: Disks large homolog 1 (927 aa).

Positions 4–64 (RKQDTQRALT…FYEVTLLDNP (61 aa)) constitute an L27 domain. PDZ domains are found at residues 223-310 (EITL…RRRK), 318-405 (DIKL…AKPT), and 466-547 (KVVL…QYRP). Positions 581-651 (KRSLYVRALF…PSKRRVEKKE (71 aa)) constitute an SH3 domain. The interval 692 to 719 (DQSEMETSDVDQHVTSNASDSESSYRGQ) is disordered. Over residues 704–717 (HVTSNASDSESSYR) the composition is skewed to polar residues. Positions 737 to 912 (SRPVIILGPT…IYNQIKQIIE (176 aa)) constitute a Guanylate kinase-like domain.

The protein belongs to the MAGUK family.

The protein resides in the cell membrane. It localises to the endoplasmic reticulum membrane. Its subcellular location is the cell junction. The protein localises to the cytoplasm. It is found in the apical cell membrane. Functionally, essential multidomain scaffolding protein required for normal development. Recruits channels, receptors and signaling molecules to discrete plasma membrane domains in polarized cells. Promotes epithelial cell layer barrier function via maintaining cell-cell adhesion. May play a role in adherens junction assembly, signal transduction and cell proliferation. The protein is Disks large homolog 1 (dlg1) of Xenopus tropicalis (Western clawed frog).